Consider the following 657-residue polypeptide: L-glutamate oxidase precursor (657 aa).

A signal peptide spans 1-12; sequence MTETPRDNSATR. FAD-binding residues include Glu-86, Ala-87, Arg-95, Met-120, Arg-121, Met-350, Glu-639, Trp-647, and Ile-648.

It belongs to the flavin monoamine oxidase family. LGOX subfamily. In terms of assembly, the mature enzyme is a heterohexamer composed of 2 alpha chains, 2 beta chains and 2 gamma chains (alpha2beta2gamma2). Requires FAD as cofactor. Post-translationally, the precursor form is proteolytically cleaved by an endopeptidase into alpha, beta and gamma chains, which form the stable mature enzyme.

Its subcellular location is the secreted. The enzyme catalyses L-glutamate + O2 + H2O = H2O2 + 2-oxoglutarate + NH4(+). Its activity is regulated as follows. Proteinase K-treated enzyme exhibits improved affinity for the substrate, increased activity and increased thermostability. Functionally, catalyzes the oxidative deamination of L-glutamate to 2-ketoglutarate along with the production of ammonia and hydrogen peroxide. Exhibits strict specificity for L-glutamate, and shows only very weak activity with L-glutamine. The protein is L-glutamate oxidase precursor of Streptomyces diastatochromogenes.